Here is a 493-residue protein sequence, read N- to C-terminus: Cytochrome P450 2E1 (493 aa).

Substrate is bound at residue Phe298–Thr303. Cys437 provides a ligand contact to heme.

This sequence belongs to the cytochrome P450 family. In terms of assembly, interacts with chaperones HSP70 and HSP90; this interaction is required for initial targeting to mitochondria. Heme serves as cofactor.

It is found in the endoplasmic reticulum membrane. It localises to the microsome membrane. Its subcellular location is the mitochondrion inner membrane. The enzyme catalyses an organic molecule + reduced [NADPH--hemoprotein reductase] + O2 = an alcohol + oxidized [NADPH--hemoprotein reductase] + H2O + H(+). It catalyses the reaction (5Z,8Z,11Z)-eicosatrienoate + reduced [NADPH--hemoprotein reductase] + O2 = 19-hydroxy-(5Z,8Z,11Z)-eicosatrienoate + oxidized [NADPH--hemoprotein reductase] + H2O + H(+). It carries out the reaction (5Z,8Z,11Z,14Z,17Z)-eicosapentaenoate + reduced [NADPH--hemoprotein reductase] + O2 = 19-hydroxy-(5Z,8Z,11Z,14Z,17Z)-eicosapentaenoate + oxidized [NADPH--hemoprotein reductase] + H2O + H(+). The catalysed reaction is (4Z,7Z,10Z,13Z,16Z,19Z)-docosahexaenoate + reduced [NADPH--hemoprotein reductase] + O2 = 21-hydroxy-(4Z,7Z,10Z,13Z,16Z,19Z)-docosahexaenoate + oxidized [NADPH--hemoprotein reductase] + H2O + H(+). The enzyme catalyses dodecanoate + reduced [NADPH--hemoprotein reductase] + O2 = 11-hydroxydodecanoate + oxidized [NADPH--hemoprotein reductase] + H2O + H(+). It catalyses the reaction tetradecanoate + reduced [NADPH--hemoprotein reductase] + O2 = 13-hydroxytetradecanoate + oxidized [NADPH--hemoprotein reductase] + H2O + H(+). It carries out the reaction 4-nitrophenol + NADPH + O2 + H(+) = 4-nitrocatechol + NADP(+) + H2O. It participates in lipid metabolism; fatty acid metabolism. The omega-1 hydroxylase activity is stimulated by cytochrome b5. Its function is as follows. A cytochrome P450 monooxygenase involved in the metabolism of fatty acids. Mechanistically, uses molecular oxygen inserting one oxygen atom into a substrate, and reducing the second into a water molecule, with two electrons provided by NADPH via cytochrome P450 reductase (NADPH--hemoprotein reductase). Catalyzes the hydroxylation of carbon-hydrogen bonds. Hydroxylates fatty acids specifically at the omega-1 position displaying the highest catalytic activity for saturated fatty acids. May be involved in the oxidative metabolism of xenobiotics. This Mesocricetus auratus (Golden hamster) protein is Cytochrome P450 2E1 (CYP2E1).